We begin with the raw amino-acid sequence, 354 residues long: uncharacterized protein (354 aa).

A helical membrane pass occupies residues 43–63; the sequence is LIAVTLWSCVGSLLFICLLAV.

The protein localises to the cell membrane. This is an uncharacterized protein from Bacillus subtilis (strain 168).